The primary structure comprises 598 residues: MSVPLRFSTPSSSPSASDNESVHDDGPTTELDTFNTTDVPRRVNTTKARQMRPKNTLKVAFSSPNLKGLDNTADSDSQPWLGGYLAGRLEDISGQSRRNYVDPYYEELNAGRRPNKPVWSLNGPLPHVLGNSVVEKISQKNQEARSRANSRVNSRANSRANSSVSLAGMDGSPNWKRKMKSAVFGSRVKLNDEEAQLPRNKSSVSIAEQAASRPKVSFSLQSSRQPSIAEEQPQTQRKSSAITVEHAENAEPETPRNNVSFSRKPSIAEQDSSQDITMPPNEIIAEESLDSGSDTETLYLNYWCKIRHFFREGFAEFLGTLVLVVFGVGSNLQATVTNGAGGSFESLSFAWGFGCMLGVYIAGGISGGHVNPAVTISLAIFRKFPWYKVPIYIFFQIWGAFFGGALAYGYHWSSITEFEGGKDIRTPATGGCLYTNPKPYVTWRNAFFDEFIGTAVLVGCLFAILDDTNSPPTQGMTAFIVGLLIAAIGMALGYQTSFTLNPARDLGPRMFAWWIGYGPHSFHLYHWWWTWGAWGGTIGGGIAGGLIYDLVIFTGPESPLNYPDNGFIDKKVHQITAKFEKEEEVENLEKTDSPIENN.

A compositionally biased stretch (low complexity) spans methionine 1 to asparagine 19. 3 disordered regions span residues methionine 1–lysine 54, glutamine 139–lysine 176, and glutamate 194–proline 279. Residues methionine 1–glycine 313 lie on the Cytoplasmic side of the membrane. The segment covering glutamate 30–alanine 48 has biased composition (polar residues). Over residues arginine 147–serine 165 the composition is skewed to low complexity. Composition is skewed to polar residues over residues phenylalanine 218 to isoleucine 242 and proline 255 to isoleucine 276. Residues phenylalanine 314–alanine 334 traverse the membrane as a helical segment. Residues threonine 335–serine 346 lie on the Extracellular side of the membrane. Residues leucine 347–glycine 367 traverse the membrane as a helical segment. The Cytoplasmic portion of the chain corresponds to glycine 368–lysine 388. The short motif at asparagine 371–alanine 373 is the NPA 1 element. The chain crosses the membrane as a helical span at residues valine 389–glycine 409. Topologically, residues tyrosine 410 to arginine 444 are extracellular. The chain crosses the membrane as a helical span at residues asparagine 445–leucine 465. Over aspartate 466 to threonine 473 the chain is Cytoplasmic. A helical transmembrane segment spans residues glutamine 474–tyrosine 494. Residues glutamine 495–glycine 532 lie on the Extracellular side of the membrane. The NPA 2 motif lies at asparagine 501–alanine 503. The chain crosses the membrane as a helical span at residues alanine 533–phenylalanine 553. The Cytoplasmic portion of the chain corresponds to threonine 554–asparagine 598.

Belongs to the MIP/aquaporin (TC 1.A.8) family.

The protein localises to the membrane. This is an uncharacterized protein from Schizosaccharomyces pombe (strain 972 / ATCC 24843) (Fission yeast).